Consider the following 632-residue polypeptide: Probable electron transfer flavoprotein-ubiquinone oxidoreductase, mitochondrial (632 aa).

93 to 107 (VCIVGAGPAGLSAAI) is an FAD binding site. Residues C575, C601, C604, and C607 each contribute to the [4Fe-4S] cluster site. The region spanning 592–621 (KRFVINSQNCVHCKTCDIKDPLQGIQWKTP) is the 4Fe-4S ferredoxin-type domain.

The protein belongs to the ETF-QO/FixC family. It depends on [4Fe-4S] cluster as a cofactor. The cofactor is FAD.

Its subcellular location is the mitochondrion inner membrane. It carries out the reaction a ubiquinone + reduced [electron-transfer flavoprotein] = a ubiquinol + oxidized [electron-transfer flavoprotein] + H(+). Functionally, accepts electrons from ETF and reduces ubiquinone. In Schizosaccharomyces pombe (strain 972 / ATCC 24843) (Fission yeast), this protein is Probable electron transfer flavoprotein-ubiquinone oxidoreductase, mitochondrial.